Reading from the N-terminus, the 273-residue chain is Tyrosinase (273 aa).

Positions 1–18 are cleaved as a signal peptide; it reads MLLFTMGLLLAILQPSTG. Residues Asn86, Asn111, and Asn161 are each glycosylated (N-linked (GlcNAc...) asparagine). Cu cation-binding residues include His180, His202, and His211. N-linked (GlcNAc...) asparagine glycosylation is present at Asn230.

Belongs to the tyrosinase family. The cofactor is Cu(2+).

It localises to the melanosome membrane. The protein localises to the melanosome. The enzyme catalyses 2 L-dopa + O2 = 2 L-dopaquinone + 2 H2O. The catalysed reaction is L-tyrosine + O2 = L-dopaquinone + H2O. This is a copper-containing oxidase that functions in the formation of pigments such as melanins and other polyphenolic compounds. Catalyzes the initial and rate limiting step in the cascade of reactions leading to melanin production from tyrosine. In addition to hydroxylating tyrosine to DOPA (3,4-dihydroxyphenylalanine), also catalyzes the oxidation of DOPA to DOPA-quinone, and possibly the oxidation of DHI (5,6-dihydroxyindole) to indole-5,6 quinone. The protein is Tyrosinase (TYR) of Coturnix japonica (Japanese quail).